Reading from the N-terminus, the 184-residue chain is Inactive cytochrome P450 monooxygenase lolP2 (184 aa).

A helical transmembrane segment spans residues 10-30; it reads GIVWLTVAAIAISYILQSSFL. Positions 161–184 are disordered; it reads RRTRGSRPRSRPRWMPARWSRSSP. Residues 163 to 172 are compositionally biased toward basic residues; it reads TRGSRPRSRP. Over residues 173–184 the composition is skewed to low complexity; it reads RWMPARWSRSSP.

It belongs to the cytochrome P450 family.

It is found in the membrane. Functionally, cytochrome P450 monooxygenase; part of the gene cluster that mediates the biosynthesis of loline alkaloids, potent insecticidal agents composed of a pyrrolizidine ring system and an uncommon ether bridge linking carbons 2 and 7. Lolines are structurally differentiated by the various modifications of the L-amino group and include norloline, loline, N-methylloline, N-acetylloline, N-acetylnorloline, and N-formylloline. The first committed step is the condensation of O-acetyl-L-homoserine (derived from L-aspartic acid) and L-proline, probably catalyzed by the gamma-type pyridoxal 5'-phosphate(PLP)-dependent enzyme lolC, to give the diamino diacid, NACPP. Ensuing cyclization, decarboxylation, and acetylation steps yield 1-exo-acetamidopyrrolizidine (AcAP). LolO is required for installation of the ether bridge upon the pathway intermediate, 1-exo-acetamidopyrrolizidine (AcAP). In sequential 2-oxoglutarate- and O(2)-consuming steps, lolO removes hydrogens from C2 and C7 of AcAP to form both carbon-oxygen bonds in N-acetylnorloline (NANL), the precursor to all other lolines. The enzymes lolD, lolE, lolF and lolT have also been proposed to be involved in the ether-bridge installation. Further processing of the exocyclic moiety of NANL by fungal N-acetamidase (LolN), methyltransferase (LolM), and cytochrome P450 (LolP) enzymes, with occasional involvement of a plant acetyltransferase, generates the other known lolines. LolN transforms NANL to norlonine which is monomethylated and dimethylated to respectively lonine and N-methyllonine (NML) by lolM. LolP catalyzes hydroxylation of the methyl group in N-methylloline (NML) and further oxygenation to N-formylloline (NFL). A plant acetyltransferase is responsible for the acetylation of loline to form N-acetylloline (NAL). LolA might interact with aspartate kinase to prevent feedback inhibition of its activity by these end products and thereby promote production of L-homoserine from L-aspartate. In Epichloe uncinata (Endophyte fungus), this protein is Inactive cytochrome P450 monooxygenase lolP2.